A 354-amino-acid polypeptide reads, in one-letter code: MIDWITSQGQGLLGAYWTPLWILIRAVIIVVPLLLCVAYLILWERKLIGWMHVRIGPNRVGPLGLLQPIADVLKLLLKEVMMPTQVSRGMYLIAPLMVLMPAVAVWAVIPFQAEVVLADVNAGLLYVMAISSVGVYGVILAGWASNSKYAFIGAMRAAAQMVSYEIAMGFALVTVLMVAGSLNLSAIVNGQNTGYFADMGINILSWNWLPLLPMFGVYFISGVAETNRHPFDVVEGESEIVAGHMIEYSGMGFALFFLAEYINMIIISTMTALMFLGGWAPPIDSVLTNAIPGFFWLVIKVFLLLSVFIWIRASFPRYRYDQIMRLGWKVFIPLTVAWLIIVAIWIKSPWNIWH.

The next 8 helical transmembrane spans lie at 22–42 (ILIR…YLIL), 91–111 (YLIA…VIPF), 124–144 (LLYV…AGWA), 168–188 (MGFA…SAIV), 203–223 (ILSW…ISGV), 255–275 (LFFL…ALMF), 291–311 (IPGF…FIWI), and 326–346 (LGWK…AIWI).

Belongs to the complex I subunit 1 family. As to quaternary structure, NDH-1 is composed of 14 different subunits. Subunits NuoA, H, J, K, L, M, N constitute the membrane sector of the complex.

The protein resides in the cell inner membrane. The enzyme catalyses a quinone + NADH + 5 H(+)(in) = a quinol + NAD(+) + 4 H(+)(out). In terms of biological role, NDH-1 shuttles electrons from NADH, via FMN and iron-sulfur (Fe-S) centers, to quinones in the respiratory chain. The immediate electron acceptor for the enzyme in this species is believed to be ubiquinone. Couples the redox reaction to proton translocation (for every two electrons transferred, four hydrogen ions are translocated across the cytoplasmic membrane), and thus conserves the redox energy in a proton gradient. This subunit may bind ubiquinone. This is NADH-quinone oxidoreductase subunit H from Cupriavidus necator (strain ATCC 17699 / DSM 428 / KCTC 22496 / NCIMB 10442 / H16 / Stanier 337) (Ralstonia eutropha).